The sequence spans 547 residues: Sodium-coupled neutral amino acid transporter 4 (547 aa).

Residues 1–30 (MDPMELRNVNIEPDDESSSGESAPDSYIGI) are disordered. Topologically, residues 1–104 (MDPMELRNVN…GLSYAMANTG (104 aa)) are extracellular. Serine 49 bears the Phosphoserine mark. Residues 105 to 125 (IILFIIMLLAVAILSLYSVHL) traverse the membrane as a helical segment. The Cytoplasmic segment spans residues 126–151 (LLKTAKEGGSLIYEKLGEKAFGWPGK). The chain crosses the membrane as a helical span at residues 152–172 (IGAFVSITMQNIGAMSSYLFI). The Extracellular segment spans residues 173-195 (IKYELPEVIRAFMGLEENTGEWY). The chain crosses the membrane as a helical span at residues 196-216 (LNGNYLIIFVSVGIILPLSLL). Over 217-220 (KNLG) the chain is Cytoplasmic. A helical transmembrane segment spans residues 221–241 (YLGYTSGFSLTCMVFFVSVVI). The Extracellular segment spans residues 242 to 332 (YKKFQIPCPL…PKYFVFNSRT (91 aa)). Cysteine 249 and cysteine 321 form a disulfide bridge. N-linked (GlcNAc...) asparagine glycosylation is found at asparagine 260, asparagine 264, and asparagine 276. A helical transmembrane segment spans residues 333–353 (AYAIPILVFAFVCHPEVLPIY). The Cytoplasmic portion of the chain corresponds to 354-369 (SELKDRSRRKMQTVSN). Residues 370–390 (ISITGMLVMYLLAALFGYLTF) form a helical membrane-spanning segment. At 391 to 411 (YGEVEDELLHAYSKVYTLDIP) the chain is on the extracellular side. The helical transmembrane segment at 412 to 432 (LLMVRLAVLVAVTLTVPIVLF) threads the bilayer. Residues 433-453 (PIRTSVITLLFPKRPFSWIRH) are Cytoplasmic-facing. Residues 454 to 474 (FLIAAVLIALNNVLVILVPTI) form a helical membrane-spanning segment. Over 475-476 (KY) the chain is Extracellular. Residues 477 to 497 (IFGFIGASSATMLIFILPAVF) form a helical membrane-spanning segment. At 498–514 (YLKLVKKETFRSPQKVG) the chain is on the cytoplasmic side. The helical transmembrane segment at 515–535 (ALIFLVVGIFFMIGSMALIII) threads the bilayer. The Extracellular portion of the chain corresponds to 536 to 547 (DWIYDPPNSKHH).

The protein belongs to the amino acid/polyamine transporter 2 family. The disulfide bond plays an important role in substrate transport, but has no effect on trafficking to the cell surface. Expressed almost exclusively in embryonic and adult liver, and at lower levels in the kidney. Expressed at lower levels in adult muscle and pancreas. Detected in fetal blood vessels. Expressed in syncytiotrophoblas of placenta during first trimester and at term. Highly expressed in first trimester placenta compared to term placenta.

It is found in the cell membrane. The protein localises to the cell projection. The protein resides in the microvillus membrane. It catalyses the reaction L-methionine(in) + Na(+)(in) = L-methionine(out) + Na(+)(out). The enzyme catalyses L-asparagine(in) + Na(+)(in) = L-asparagine(out) + Na(+)(out). The catalysed reaction is L-threonine(in) + Na(+)(in) = L-threonine(out) + Na(+)(out). It carries out the reaction L-serine(in) + Na(+)(in) = L-serine(out) + Na(+)(out). It catalyses the reaction glycine(in) + Na(+)(in) = glycine(out) + Na(+)(out). The enzyme catalyses L-alanine(in) + Na(+)(in) = L-alanine(out) + Na(+)(out). The catalysed reaction is L-glutamine(in) + Na(+)(in) = L-glutamine(out) + Na(+)(out). It carries out the reaction L-histidine(in) + Na(+)(in) = L-histidine(out) + Na(+)(out). It catalyses the reaction L-cysteine(in) + Na(+)(in) = L-cysteine(out) + Na(+)(out). The enzyme catalyses L-proline(in) + Na(+)(in) = L-proline(out) + Na(+)(out). Symporter that cotransports neutral amino acids and sodium ions from the extraccellular to the intracellular side of the cell membrane. The transport is electrogenic, pH dependent and partially tolerates substitution of Na(+) by Li(+). Preferentially transports smaller amino acids, such as glycine, L-alanine, L-serine, L-asparagine and L-threonine, followed by L-cysteine, L-histidine, L-proline and L-glutamine and L-methionine. The protein is Sodium-coupled neutral amino acid transporter 4 of Homo sapiens (Human).